The following is a 430-amino-acid chain: Enolase (430 aa).

A (2R)-2-phosphoglycerate-binding site is contributed by Gln-163. The active-site Proton donor is the Glu-205. Mg(2+)-binding residues include Asp-242, Glu-285, and Asp-312. (2R)-2-phosphoglycerate-binding residues include Lys-337, Arg-366, Ser-367, and Lys-388. Catalysis depends on Lys-337, which acts as the Proton acceptor.

It belongs to the enolase family. Mg(2+) serves as cofactor.

Its subcellular location is the cytoplasm. It is found in the secreted. The protein localises to the cell surface. The enzyme catalyses (2R)-2-phosphoglycerate = phosphoenolpyruvate + H2O. Its pathway is carbohydrate degradation; glycolysis; pyruvate from D-glyceraldehyde 3-phosphate: step 4/5. Catalyzes the reversible conversion of 2-phosphoglycerate (2-PG) into phosphoenolpyruvate (PEP). It is essential for the degradation of carbohydrates via glycolysis. This is Enolase from Maridesulfovibrio salexigens (strain ATCC 14822 / DSM 2638 / NCIMB 8403 / VKM B-1763) (Desulfovibrio salexigens).